Here is a 117-residue protein sequence, read N- to C-terminus: Iron-sulfur cluster insertion protein ErpA (117 aa).

3 residues coordinate iron-sulfur cluster: cysteine 45, cysteine 109, and cysteine 111.

This sequence belongs to the HesB/IscA family. Homodimer. It depends on iron-sulfur cluster as a cofactor.

Functionally, required for insertion of 4Fe-4S clusters for at least IspG. This chain is Iron-sulfur cluster insertion protein ErpA, found in Ruthia magnifica subsp. Calyptogena magnifica.